Consider the following 303-residue polypeptide: Ribonuclease Z (303 aa).

7 residues coordinate Zn(2+): His61, His63, Asp65, His66, His139, Asp207, and His266. Residue Asp65 is the Proton acceptor of the active site.

Belongs to the RNase Z family. In terms of assembly, homodimer. The cofactor is Zn(2+).

It catalyses the reaction Endonucleolytic cleavage of RNA, removing extra 3' nucleotides from tRNA precursor, generating 3' termini of tRNAs. A 3'-hydroxy group is left at the tRNA terminus and a 5'-phosphoryl group is left at the trailer molecule.. In terms of biological role, zinc phosphodiesterase, which displays some tRNA 3'-processing endonuclease activity. Probably involved in tRNA maturation, by removing a 3'-trailer from precursor tRNA. This chain is Ribonuclease Z, found in Clostridium kluyveri (strain ATCC 8527 / DSM 555 / NBRC 12016 / NCIMB 10680 / K1).